The primary structure comprises 137 residues: Large ribosomal subunit protein uL16 (137 aa).

This sequence belongs to the universal ribosomal protein uL16 family. Part of the 50S ribosomal subunit.

Its function is as follows. Binds 23S rRNA and is also seen to make contacts with the A and possibly P site tRNAs. In Paracoccus denitrificans (strain Pd 1222), this protein is Large ribosomal subunit protein uL16.